We begin with the raw amino-acid sequence, 326 residues long: Archaeal actin homolog (326 aa).

ATP-binding positions include 10–14 (YGDTK), serine 179, glutamine 231, 285–288 (GGSN), and glutamine 311.

This sequence belongs to the thermophilic archaeal actin family.

Functionally, polymerizes into bundles of filaments, forming a helix with a filament width of 5.5 nm and an axial repeating unit of 5.5 nm. Polymerization of Ta0583 requires NTP and is optimal with ATP, but GTP, UTP, CTP, and even the deoxy form of NTP can also support the polymerization reaction. Nucleoside diphosphate or AMP-PNP does not support polymerization. This is Archaeal actin homolog from Thermoplasma acidophilum (strain ATCC 25905 / DSM 1728 / JCM 9062 / NBRC 15155 / AMRC-C165).